A 31-amino-acid polypeptide reads, in one-letter code: Protamine PTP4 (31 aa).

Positions 1–31 (MPRRRRASRRIRRRRRPRVSRRRRGGRRRRR) are disordered.

In terms of tissue distribution, testis.

Its subcellular location is the nucleus. The protein localises to the chromosome. Protamines substitute for histones in the chromatin of sperm during the haploid phase of spermatogenesis. They compact sperm DNA into a highly condensed, stable and inactive complex. In Oncorhynchus mykiss (Rainbow trout), this protein is Protamine PTP4.